A 292-amino-acid chain; its full sequence is Elongation factor Ts (292 aa).

Residues 82-85 (TDFV) are involved in Mg(2+) ion dislocation from EF-Tu.

This sequence belongs to the EF-Ts family.

The protein localises to the cytoplasm. Its function is as follows. Associates with the EF-Tu.GDP complex and induces the exchange of GDP to GTP. It remains bound to the aminoacyl-tRNA.EF-Tu.GTP complex up to the GTP hydrolysis stage on the ribosome. The sequence is that of Elongation factor Ts from Bordetella parapertussis (strain 12822 / ATCC BAA-587 / NCTC 13253).